Consider the following 2726-residue polypeptide: Filamin-C (2726 aa).

An actin-binding region spans residues 1–260 (MMNNSNYSDA…VMTYLSQFPK (260 aa)). Residue S5 is modified to Phosphoserine. 2 Calponin-homology (CH) domains span residues 37–143 (KIQQ…LHYS) and 160–263 (QTPK…KAKL). 15 Filamin repeats span residues 271 to 369 (SKQL…EVNV), 371 to 469 (MALG…PVHV), 470 to 566 (AEAC…EVQV), 567 to 659 (SPEA…IAHI), 663 to 759 (PPDC…RVNV), 760 to 862 (GEGS…HIKV), 863 to 961 (DPSH…VVNV), 962 to 1057 (APPL…AVEG), 1058 to 1150 (VLPP…KATI), 1151 to 1245 (QPVF…RVHV), 1246 to 1345 (QPAV…RVGV), 1346 to 1438 (TEGC…RVPV), 1439 to 1534 (KDVV…KIKV), 1535 to 1631 (LPSH…RIHA), and 1636 to 1735 (DASK…HVLA). R1003 is modified (omega-N-methylarginine). S1162 and S1339 each carry phosphoserine. The hinge 1 stretch occupies residues 1736–1759 (CDPLPHVEEPAEMLQMRQPYAPLR). Filamin repeat units follow at residues 1760–1855 (PGTC…QFYV), 1856–1947 (DAIN…TAKI), 1948–2034 (TGDD…KILV), and 2037–2129 (SEIG…TVKV). The residue at position 2043 (S2043) is a Phosphoserine. The intradomain insert; mediate targeting to Z lines stretch occupies residues 2163–2244 (GNWFQMVSAQ…FGSITRQQEG (82 aa)). A compositionally biased stretch (basic and acidic residues) spans 2193–2210 (EISKTRGGETKREVRVEE). The tract at residues 2193 to 2214 (EISKTRGGETKREVRVEESTQV) is disordered. One copy of the Filamin 20; mediates interaction with XIRP1 repeat lies at 2212 to 2307 (TQVGGDPFPA…VPGSPFQFTV (96 aa)). S2234 and S2237 each carry phosphoserine. T2239 is modified (phosphothreonine). Residues 2241–2260 (QQEGEASSQDMTAQVTSPSG) show a composition bias toward polar residues. Positions 2241–2261 (QQEGEASSQDMTAQVTSPSGK) are disordered. 3 Filamin repeats span residues 2310–2402 (LGEG…VVPV), 2404–2497 (SLSD…KIRV), and 2501–2593 (SQAG…KAKV). Residues 2404–2725 (SLSDDARRLT…VPGSPFKVNV (322 aa)) form an interaction with INPPL1 region. A phosphoserine mark is found at S2587, S2618, S2621, S2633, S2715, and S2719. The segment at 2594–2630 (TGPRLSGGHSLHETSTVLVETVTKSSSSRGASYSSIP) is hinge 2. The self-association site, tail stretch occupies residues 2594–2726 (TGPRLSGGHS…PGSPFKVNVP (133 aa)). Residues 2631–2725 (KFSSDASKVV…VPGSPFKVNV (95 aa)) form a Filamin 24 repeat.

Belongs to the filamin family. As to quaternary structure, homodimer; the filamin repeat 24 and the second hinge domain are important for dimer formation. Interacts with FLNB, INPPL1, ITGB1A, KCND2, MYOT, MYOZ1 and MYOZ3. Interacts with sarcoglycans SGCD and SGCG. Interacts (via filament repeats 17-18, 20-21 and 24) with USP25 (isoform USP25m only). Interacts with FBLIM1. Interacts with XIRP1; this interaction is mediated by filamin 20 repeat. Interacts with KY. Interacts with IGFN1. Interacts with MICALL2. Interacts with ANK3. Interacts with MICALL2. Interacts with ANK3. Interacts with SYNPO2. Post-translationally, ubiquitinated by FBXL22, leading to proteasomal degradation.

Its subcellular location is the cytoplasm. The protein localises to the membrane. The protein resides in the cytoskeleton. It localises to the myofibril. It is found in the sarcomere. Its subcellular location is the z line. Muscle-specific filamin, which plays a central role in sarcomere assembly and organization. Critical for normal myogenesis, it probably functions as a large actin-cross-linking protein with structural functions at the Z lines in muscle cells. May be involved in reorganizing the actin cytoskeleton in response to signaling events. The chain is Filamin-C (Flnc) from Mus musculus (Mouse).